A 179-amino-acid chain; its full sequence is ATP synthase subunit delta (179 aa).

This sequence belongs to the ATPase delta chain family. F-type ATPases have 2 components, F(1) - the catalytic core - and F(0) - the membrane proton channel. F(1) has five subunits: alpha(3), beta(3), gamma(1), delta(1), epsilon(1). F(0) has three main subunits: a(1), b(2) and c(10-14). The alpha and beta chains form an alternating ring which encloses part of the gamma chain. F(1) is attached to F(0) by a central stalk formed by the gamma and epsilon chains, while a peripheral stalk is formed by the delta and b chains.

Its subcellular location is the cell inner membrane. In terms of biological role, f(1)F(0) ATP synthase produces ATP from ADP in the presence of a proton or sodium gradient. F-type ATPases consist of two structural domains, F(1) containing the extramembraneous catalytic core and F(0) containing the membrane proton channel, linked together by a central stalk and a peripheral stalk. During catalysis, ATP synthesis in the catalytic domain of F(1) is coupled via a rotary mechanism of the central stalk subunits to proton translocation. Its function is as follows. This protein is part of the stalk that links CF(0) to CF(1). It either transmits conformational changes from CF(0) to CF(1) or is implicated in proton conduction. This Bordetella petrii (strain ATCC BAA-461 / DSM 12804 / CCUG 43448) protein is ATP synthase subunit delta.